Reading from the N-terminus, the 245-residue chain is MLFPTPLVEGRLVKRYMRFLADVILDDGTAVTAHCANSGSMASVKEPGSPVWLSESPNPDRKLKYTWEIIRVGDAYSGVNTGTPNAVVAEAIAEGKIPPLAGYARLRREVKYGKTSRIDILLEDDAAADDAPARPRCYVEVKNVTLKRDPAWDGPIDFPDAVTTRGAKHLLELADMVDQGHRAAMVYLVQRTDGGAVAMAADIDPAYAAGLKTAIAKGVEVYCLGCEVDPLRGIWVNRALPLIAP.

This sequence belongs to the SfsA family.

The polypeptide is Sugar fermentation stimulation protein homolog (Rhodospirillum rubrum (strain ATCC 11170 / ATH 1.1.1 / DSM 467 / LMG 4362 / NCIMB 8255 / S1)).